The sequence spans 406 residues: Cysteine desulfurase (406 aa).

Lysine 226 carries the post-translational modification N6-(pyridoxal phosphate)lysine. Catalysis depends on cysteine 364, which acts as the Cysteine persulfide intermediate.

The protein belongs to the class-V pyridoxal-phosphate-dependent aminotransferase family. Csd subfamily. In terms of assembly, homodimer. Interacts with SufE and the SufBCD complex composed of SufB, SufC and SufD. The interaction with SufE is required to mediate the direct transfer of the sulfur atom from the S-sulfanylcysteine. Requires pyridoxal 5'-phosphate as cofactor.

The protein localises to the cytoplasm. It carries out the reaction (sulfur carrier)-H + L-cysteine = (sulfur carrier)-SH + L-alanine. It catalyses the reaction L-selenocysteine + AH2 = hydrogenselenide + L-alanine + A + H(+). It functions in the pathway cofactor biosynthesis; iron-sulfur cluster biosynthesis. Cysteine desulfurases mobilize the sulfur from L-cysteine to yield L-alanine, an essential step in sulfur metabolism for biosynthesis of a variety of sulfur-containing biomolecules. Component of the suf operon, which is activated and required under specific conditions such as oxidative stress and iron limitation. Acts as a potent selenocysteine lyase in vitro, that mobilizes selenium from L-selenocysteine. Selenocysteine lyase activity is however unsure in vivo. The sequence is that of Cysteine desulfurase from Klebsiella pneumoniae (strain 342).